Consider the following 141-residue polypeptide: ATP synthase epsilon chain (141 aa).

The protein belongs to the ATPase epsilon chain family. As to quaternary structure, F-type ATPases have 2 components, CF(1) - the catalytic core - and CF(0) - the membrane proton channel. CF(1) has five subunits: alpha(3), beta(3), gamma(1), delta(1), epsilon(1). CF(0) has three main subunits: a, b and c.

It localises to the cell inner membrane. Produces ATP from ADP in the presence of a proton gradient across the membrane. In Pseudomonas fluorescens (strain ATCC BAA-477 / NRRL B-23932 / Pf-5), this protein is ATP synthase epsilon chain.